The chain runs to 643 residues: Cytoplasmic dynein 1 intermediate chain 1 (643 aa).

2 stretches are compositionally biased toward basic and acidic residues: residues 1-13 (MSDK…ELER) and 20-60 (QIRE…RETE). Disordered stretches follow at residues 1–65 (MSDK…LLQS) and 96–123 (MSPS…RTLQ). S2 bears the N-acetylserine mark. Positions 2-123 (SDKSDLKAEL…DLGPLTRTLQ (122 aa)) are interaction with DCTN1. Residues S50 and S100 each carry the phosphoserine modification. Low complexity predominate over residues 96–107 (MSPSSKSVSTPS). Position 105 is a phosphothreonine (T105). Phosphoserine is present on residues S107 and S111. The segment at 145 to 161 (KLGVSKVTQVDFLPREV) is interaction with DYNLT1. Positions 167–219 (ETQTPLATHQSEEDEEDEEMVEPKVGHDSELENQDKKQETKEAPPRELTEEEK) are disordered. A Phosphothreonine modification is found at T174. Residues S177 and S195 each carry the phosphoserine modification. Positions 187-219 (VEPKVGHDSELENQDKKQETKEAPPRELTEEEK) are enriched in basic and acidic residues. WD repeat units lie at residues 283-332 (SKHR…TTPE), 336-376 (HCQS…RTPV), 385-426 (AHTH…TPQE), 435-475 (SKPV…AGIG), 480-525 (GHQG…PLYS), 528-568 (DNAD…EVPT), and 574-613 (EGAY…VPHN). The residue at position 633 (S633) is a Phosphoserine.

Belongs to the dynein intermediate chain family. Homodimer. The cytoplasmic dynein 1 complex consists of two catalytic heavy chains (HCs) and a number of non-catalytic subunits presented by intermediate chains (ICs), light intermediate chains (LICs) and light chains (LCs); the composition seems to vary in respect to the IC, LIC and LC composition. The heavy chain homodimer serves as a scaffold for the probable homodimeric assembly of the respective non-catalytic subunits. The ICs and LICs bind directly to the HC dimer and the LCs assemble on the IC dimer. Isoform 1, isoform 2 and isoform 3 interact with DYNC1H1. Isoform 1, isoform 2 and isoform 3 interact with DYNLT3. Isoform 1, isoform 2 and isoform 3 interact with DYNLT1. Interacts with DCTN1. Interacts with MCRS1; the interaction is required for the proper distribution of centriolar satellites. In terms of tissue distribution, high levels seen in the brain and testis, while a lower level expression is seen in the liver, spleen, kidney, lung, skeletal muscle and heart.

It localises to the cytoplasm. The protein localises to the chromosome. The protein resides in the centromere. Its subcellular location is the kinetochore. It is found in the cytoskeleton. It localises to the spindle pole. Acts as one of several non-catalytic accessory components of the cytoplasmic dynein 1 complex that are thought to be involved in linking dynein to cargos and to adapter proteins that regulate dynein function. Cytoplasmic dynein 1 acts as a motor for the intracellular retrograde motility of vesicles and organelles along microtubules. The intermediate chains mediate the binding of dynein to dynactin via its 150 kDa component (p150-glued) DCTN1. May play a role in mediating the interaction of cytoplasmic dynein with membranous organelles and kinetochores. The chain is Cytoplasmic dynein 1 intermediate chain 1 (Dync1i1) from Rattus norvegicus (Rat).